We begin with the raw amino-acid sequence, 845 residues long: Protein translocase subunit SecA 1 (845 aa).

Residues Gln-85, 103–107 (GEGKT), and Asp-492 contribute to the ATP site.

It belongs to the SecA family. As to quaternary structure, monomer and homodimer. Part of the essential Sec protein translocation apparatus which comprises SecA, SecYEG and auxiliary proteins SecDF. Other proteins may also be involved.

Its subcellular location is the cell membrane. The protein localises to the cytoplasm. The catalysed reaction is ATP + H2O + cellular proteinSide 1 = ADP + phosphate + cellular proteinSide 2.. In terms of biological role, part of the Sec protein translocase complex. Interacts with the SecYEG preprotein conducting channel. Has a central role in coupling the hydrolysis of ATP to the transfer of proteins into and across the cell membrane, serving as an ATP-driven molecular motor driving the stepwise translocation of polypeptide chains across the membrane. The polypeptide is Protein translocase subunit SecA 1 (Corynebacterium efficiens (strain DSM 44549 / YS-314 / AJ 12310 / JCM 11189 / NBRC 100395)).